A 295-amino-acid chain; its full sequence is Manganese transport system membrane protein MntD (295 aa).

9 helical membrane passes run 7-27 (IIAT…FLVL), 42-62 (LLGI…YMFI), 63-83 (GAAA…SKGV), 87-107 (AAIG…LSVY), 138-158 (IGPK…VLIS), 174-194 (ALAL…MLSL), 203-223 (VGAV…HLLT), 227-247 (LYML…GYFF), and 253-273 (VSIS…AFLF).

It belongs to the ABC-3 integral membrane protein family. In terms of assembly, the complex is probably composed of two ATP-binding proteins (MntB), two transmembrane proteins (MntC and MntD) and a solute-binding protein (MntA).

Its subcellular location is the cell membrane. Functionally, probably part of the ABC transporter complex MntABCD involved in manganese import. Probably responsible for the translocation of the substrate across the membrane. The protein is Manganese transport system membrane protein MntD of Bacillus subtilis (strain 168).